The following is a 378-amino-acid chain: Erythronate-4-phosphate dehydrogenase (378 aa).

Substrate is bound by residues Ser-45 and Thr-66. NAD(+)-binding residues include Asp-146 and Thr-175. Residue Arg-208 is part of the active site. Asp-232 contributes to the NAD(+) binding site. The active site involves Glu-237. His-254 acts as the Proton donor in catalysis. Gly-257 contacts NAD(+). Residue Tyr-258 coordinates substrate.

The protein belongs to the D-isomer specific 2-hydroxyacid dehydrogenase family. PdxB subfamily. Homodimer.

The protein resides in the cytoplasm. It carries out the reaction 4-phospho-D-erythronate + NAD(+) = (R)-3-hydroxy-2-oxo-4-phosphooxybutanoate + NADH + H(+). It functions in the pathway cofactor biosynthesis; pyridoxine 5'-phosphate biosynthesis; pyridoxine 5'-phosphate from D-erythrose 4-phosphate: step 2/5. In terms of biological role, catalyzes the oxidation of erythronate-4-phosphate to 3-hydroxy-2-oxo-4-phosphonooxybutanoate. The protein is Erythronate-4-phosphate dehydrogenase of Pectobacterium atrosepticum (strain SCRI 1043 / ATCC BAA-672) (Erwinia carotovora subsp. atroseptica).